The chain runs to 739 residues: Phosphoribosylformylglycinamidine synthase subunit PurL (739 aa).

Residue H54 is part of the active site. 2 residues coordinate ATP: Y57 and K96. Residue E98 coordinates Mg(2+). Substrate is bound by residues 99–102 and R121; that span reads SHNH. H100 serves as the catalytic Proton acceptor. D122 provides a ligand contact to Mg(2+). Position 245 (Q245) interacts with substrate. D273 serves as a coordination point for Mg(2+). 317–319 contacts substrate; sequence ESQ. D500 and G537 together coordinate ATP. N538 provides a ligand contact to Mg(2+). Residue S540 coordinates substrate.

It belongs to the FGAMS family. Monomer. Part of the FGAM synthase complex composed of 1 PurL, 1 PurQ and 2 PurS subunits.

It localises to the cytoplasm. It carries out the reaction N(2)-formyl-N(1)-(5-phospho-beta-D-ribosyl)glycinamide + L-glutamine + ATP + H2O = 2-formamido-N(1)-(5-O-phospho-beta-D-ribosyl)acetamidine + L-glutamate + ADP + phosphate + H(+). Its pathway is purine metabolism; IMP biosynthesis via de novo pathway; 5-amino-1-(5-phospho-D-ribosyl)imidazole from N(2)-formyl-N(1)-(5-phospho-D-ribosyl)glycinamide: step 1/2. Its function is as follows. Part of the phosphoribosylformylglycinamidine synthase complex involved in the purines biosynthetic pathway. Catalyzes the ATP-dependent conversion of formylglycinamide ribonucleotide (FGAR) and glutamine to yield formylglycinamidine ribonucleotide (FGAM) and glutamate. The FGAM synthase complex is composed of three subunits. PurQ produces an ammonia molecule by converting glutamine to glutamate. PurL transfers the ammonia molecule to FGAR to form FGAM in an ATP-dependent manner. PurS interacts with PurQ and PurL and is thought to assist in the transfer of the ammonia molecule from PurQ to PurL. This Exiguobacterium sp. (strain ATCC BAA-1283 / AT1b) protein is Phosphoribosylformylglycinamidine synthase subunit PurL.